Here is a 209-residue protein sequence, read N- to C-terminus: Ribonuclease HII (209 aa).

The RNase H type-2 domain maps to 7–198 (GPVAGVDEAG…VAKAHQEWLH (192 aa)). 3 residues coordinate a divalent metal cation: Asp13, Glu14, and Asp107.

Belongs to the RNase HII family. Mn(2+) is required as a cofactor. The cofactor is Mg(2+).

It localises to the cytoplasm. The catalysed reaction is Endonucleolytic cleavage to 5'-phosphomonoester.. Endonuclease that specifically degrades the RNA of RNA-DNA hybrids. The chain is Ribonuclease HII from Corynebacterium glutamicum (strain R).